The sequence spans 554 residues: Formate--tetrahydrofolate ligase (554 aa).

63 to 70 (TPAGEGKT) provides a ligand contact to ATP.

Belongs to the formate--tetrahydrofolate ligase family.

The enzyme catalyses (6S)-5,6,7,8-tetrahydrofolate + formate + ATP = (6R)-10-formyltetrahydrofolate + ADP + phosphate. Its pathway is one-carbon metabolism; tetrahydrofolate interconversion. The chain is Formate--tetrahydrofolate ligase from Halothermothrix orenii (strain H 168 / OCM 544 / DSM 9562).